A 152-amino-acid polypeptide reads, in one-letter code: Calmodulin-like protein 2 (152 aa).

EF-hand domains are found at residues Met1–Met36, Val37–Glu72, Glu74–Lys109, and Arg112–Ala147. Asp14, Asn16, Asp18, Lys20, Glu25, Asp50, Asn52, Asp54, Glu61, Asp87, Asn89, Asp91, Glu98, Asp125, Asp127, Asp129, Met131, and Glu136 together coordinate Ca(2+).

It belongs to the calmodulin family.

Functionally, potential calcium sensor that is required for pollen tube attraction for ovule fertilization. The sequence is that of Calmodulin-like protein 2 (CML2) from Arabidopsis thaliana (Mouse-ear cress).